We begin with the raw amino-acid sequence, 173 residues long: Ribulose bisphosphate carboxylase small subunit, chloroplastic 1 (173 aa).

The transit peptide at M1–S52 directs the protein to the chloroplast.

This sequence belongs to the RuBisCO small chain family. As to quaternary structure, heterohexadecamer of 8 large and 8 small subunits.

The protein localises to the plastid. It localises to the chloroplast. Functionally, ruBisCO catalyzes two reactions: the carboxylation of D-ribulose 1,5-bisphosphate, the primary event in carbon dioxide fixation, as well as the oxidative fragmentation of the pentose substrate. Both reactions occur simultaneously and in competition at the same active site. Although the small subunit is not catalytic it is essential for maximal activity. The polypeptide is Ribulose bisphosphate carboxylase small subunit, chloroplastic 1 (Lemna gibba (Swollen duckweed)).